A 547-amino-acid chain; its full sequence is KsdD-like steroid dehydrogenase MSMEG_5835 (547 aa).

5–36 (DVIVVGAGLAGLVAACELVERGHSVIIVDQEN) is a binding site for FAD.

This sequence belongs to the FAD-dependent oxidoreductase 2 family. It depends on FAD as a cofactor.

It functions in the pathway lipid metabolism; steroid biosynthesis. Its function is as follows. Able to catalyze the elimination of the C-1 and C-2 hydrogen atoms of the A-ring from the polycyclic ring structure of 3-ketosteroids, but the ketosteroid dehydrogenase activity is low compared to KsdD in the cholesterol degradation process. The low activity could be due to different substrate specificity. The polypeptide is KsdD-like steroid dehydrogenase MSMEG_5835 (Mycolicibacterium smegmatis (strain ATCC 700084 / mc(2)155) (Mycobacterium smegmatis)).